A 236-amino-acid chain; its full sequence is Small ribosomal subunit protein uS2c (236 aa).

The protein belongs to the universal ribosomal protein uS2 family.

Its subcellular location is the plastid. It is found in the chloroplast. The chain is Small ribosomal subunit protein uS2c (rps2) from Nicotiana tabacum (Common tobacco).